A 286-amino-acid polypeptide reads, in one-letter code: Alpha-ketoglutarate-dependent dioxygenase alkB homolog 3 (286 aa).

A disordered region spans residues 21 to 45 (QAIAQPATTAKSHLHQKPGQTWKNK). Over residues 22-31 (AIAQPATTAK) the composition is skewed to polar residues. Substrate contacts are provided by residues Trp-115 and 141-143 (YTY). One can recognise a Fe2OG dioxygenase domain in the interval 172 to 278 (TFNSLLCNLY…RVNLTFRTVY (107 aa)). Leu-177 carries the post-translational modification (4R)-5-hydroxyleucine; alternate. At Leu-177 the chain carries (4R)-5-oxoleucine; alternate. 2-oxoglutarate is bound at residue 179–181 (NLY). 2 residues coordinate Fe cation: His-191 and Asp-193. Asp-194 is a binding site for substrate. Residue His-257 participates in Fe cation binding. Residues 269 to 275 (RVNLTFR) and Arg-275 contribute to the 2-oxoglutarate site.

It belongs to the alkB family. Interacts with the ASCC complex composed of ASCC1, ASCC2 and ASCC3. Interacts directly with ASCC3, and is thereby recruited to the ASCC complex. Interacts with OTUD4; the interaction is direct. Interacts with USP7 and USP9X. Fe(2+) is required as a cofactor. Post-translationally, ubiquitinated; undergoes 'Lys-48'-linked polyubiquitination. OTUD4 promotes USP7 and USP9X-dependent deubiquitination of 'Lys-48'-polyubiquitinated ALKBH3 promoting the repair of alkylated DNA lesions. Ubiquitous. Detected in heart, pancreas, skeletal muscle, thymus, testis, ovary, spleen, prostate, small intestine, peripheral blood leukocytes, urinary bladder and colon.

It is found in the nucleus. Its subcellular location is the cytoplasm. The enzyme catalyses an N(1)-methyladenosine in mRNA + 2-oxoglutarate + O2 = an adenosine in mRNA + formaldehyde + succinate + CO2. The catalysed reaction is a methylated nucleobase within DNA + 2-oxoglutarate + O2 = a nucleobase within DNA + formaldehyde + succinate + CO2. It carries out the reaction an N(1)-methyl-2'-deoxyadenosine in single-stranded DNA + 2-oxoglutarate + O2 = a 2'-deoxyadenosine in single-stranded DNA + formaldehyde + succinate + CO2 + H(+). It catalyses the reaction an N(3)-methyl-2'-deoxycytidine in single-stranded DNA + 2-oxoglutarate + O2 = a 2'-deoxycytidine in single-stranded DNA + formaldehyde + succinate + CO2 + H(+). The enzyme catalyses a 3,N(4)-etheno-2'-deoxycytidine in single-stranded DNA + 2-oxoglutarate + O2 + H2O = a 2'-deoxycytidine in single-stranded DNA + glyoxal + succinate + CO2. With respect to regulation, activated by ascorbate. In terms of biological role, dioxygenase that mediates demethylation of DNA and RNA containing 1-methyladenosine (m1A). Repairs alkylated DNA containing 1-methyladenosine (m1A) and 3-methylcytosine (m3C) by oxidative demethylation. Has a strong preference for single-stranded DNA. Able to process alkylated m3C within double-stranded regions via its interaction with ASCC3, which promotes DNA unwinding to generate single-stranded substrate needed for ALKBH3. Can repair exocyclic 3,N4-ethenocytosine adducs in single-stranded DNA. Also acts on RNA. Demethylates N(1)-methyladenosine (m1A) RNA, an epigenetic internal modification of messenger RNAs (mRNAs) highly enriched within 5'-untranslated regions (UTRs) and in the vicinity of start codons. Requires molecular oxygen, alpha-ketoglutarate and iron. The sequence is that of Alpha-ketoglutarate-dependent dioxygenase alkB homolog 3 from Homo sapiens (Human).